Here is a 300-residue protein sequence, read N- to C-terminus: Ribosomal protein L11 methyltransferase (300 aa).

Residues T152, G173, D195, and N234 each contribute to the S-adenosyl-L-methionine site.

The protein belongs to the methyltransferase superfamily. PrmA family.

Its subcellular location is the cytoplasm. The catalysed reaction is L-lysyl-[protein] + 3 S-adenosyl-L-methionine = N(6),N(6),N(6)-trimethyl-L-lysyl-[protein] + 3 S-adenosyl-L-homocysteine + 3 H(+). Its function is as follows. Methylates ribosomal protein L11. The chain is Ribosomal protein L11 methyltransferase from Burkholderia thailandensis (strain ATCC 700388 / DSM 13276 / CCUG 48851 / CIP 106301 / E264).